The chain runs to 195 residues: Glycerol-3-phosphate acyltransferase 1 (195 aa).

The next 5 helical transmembrane spans lie at 6–26, 52–72, 74–94, 117–137, and 168–188; these read VILTGIFMAYAVGSLAGGHFL, LGIAAGIMTFIWDTAKGFLVV, LGLKGGGAELGVLMALAAVAG, LAVYPAAVPPGAALMGLLTFL, and FGLGLAAIMLLRHGPLVISLF.

It belongs to the PlsY family. In terms of assembly, probably interacts with PlsX.

It localises to the cell membrane. The enzyme catalyses an acyl phosphate + sn-glycerol 3-phosphate = a 1-acyl-sn-glycero-3-phosphate + phosphate. Its pathway is lipid metabolism; phospholipid metabolism. In terms of biological role, catalyzes the transfer of an acyl group from acyl-phosphate (acyl-PO(4)) to glycerol-3-phosphate (G3P) to form lysophosphatidic acid (LPA). This enzyme utilizes acyl-phosphate as fatty acyl donor, but not acyl-CoA or acyl-ACP. This chain is Glycerol-3-phosphate acyltransferase 1, found in Moorella thermoacetica (strain ATCC 39073 / JCM 9320).